Reading from the N-terminus, the 498-residue chain is Cobyric acid synthase (498 aa).

Positions 257–447 (DLEIAVLRLP…LHGLLDNGPW (191 aa)) constitute a GATase cobBQ-type domain. Cysteine 338 (nucleophile) is an active-site residue. Histidine 439 is a catalytic residue.

It belongs to the CobB/CobQ family. CobQ subfamily.

The protein operates within cofactor biosynthesis; adenosylcobalamin biosynthesis. In terms of biological role, catalyzes amidations at positions B, D, E, and G on adenosylcobyrinic A,C-diamide. NH(2) groups are provided by glutamine, and one molecule of ATP is hydrogenolyzed for each amidation. The polypeptide is Cobyric acid synthase (Synechococcus sp. (strain CC9605)).